The primary structure comprises 326 residues: Immune-associated nucleotide-binding protein 4 (326 aa).

The AIG1-type G domain maps to 17–225; it reads EPIKNIVLVG…FTDEMHRKIQ (209 aa). The tract at residues 26-33 is G1; that stretch reads GRTGNGKS. GTP-binding positions include 26–34 and serine 47; that span reads GRTGNGKSA. Positions 53–57 are G2; it reads GVTMK. Residues 75 to 78 form a G3 region; that stretch reads DTPG. Residues 145-148 are G4; it reads TGGD. A G5 region spans residues 184–186; the sequence is DNR. GTP is bound at residue asparagine 185. The stretch at 217-241 forms a coiled coil; it reads TDEMHRKIQKEAETLREQQKEVESK.

This sequence belongs to the TRAFAC class TrmE-Era-EngA-EngB-Septin-like GTPase superfamily. AIG1/Toc34/Toc159-like paraseptin GTPase family. IAN subfamily. In terms of tissue distribution, expressed in radicles of the germinating seeds.

The polypeptide is Immune-associated nucleotide-binding protein 4 (Arabidopsis thaliana (Mouse-ear cress)).